Reading from the N-terminus, the 153-residue chain is Myoglobin (153 aa).

The region spanning 1–147 (MATACVKSLE…FSDECLDHLK (147 aa)) is the Globin domain. Position 94 (histidine 94) interacts with heme b.

It belongs to the globin family. As to quaternary structure, homodimer; disulfide-linked. In terms of processing, the N-terminus is blocked. In terms of tissue distribution, body wall globin is localized in cellular compartments belonging to the hypodermis, the dorsal, ventral and lateral cords, the nerve ring, and body wall muscle.

Its subcellular location is the cytoplasm. In terms of biological role, high oxygen affinity. Probably supplies oxygen needed for muscle activity. This Ascaris suum (Pig roundworm) protein is Myoglobin.